A 507-amino-acid polypeptide reads, in one-letter code: Histidine ammonia-lyase (507 aa).

The segment at residues 140–142 (ASG) is a cross-link (5-imidazolinone (Ala-Gly)). Ser141 is subject to 2,3-didehydroalanine (Ser).

The protein belongs to the PAL/histidase family. Contains an active site 4-methylidene-imidazol-5-one (MIO), which is formed autocatalytically by cyclization and dehydration of residues Ala-Ser-Gly.

The protein localises to the cytoplasm. It carries out the reaction L-histidine = trans-urocanate + NH4(+). Its pathway is amino-acid degradation; L-histidine degradation into L-glutamate; N-formimidoyl-L-glutamate from L-histidine: step 1/3. In Yersinia enterocolitica serotype O:8 / biotype 1B (strain NCTC 13174 / 8081), this protein is Histidine ammonia-lyase.